A 193-amino-acid polypeptide reads, in one-letter code: Peptidyl-tRNA hydrolase (193 aa).

H17 contacts tRNA. Catalysis depends on H22, which acts as the Proton acceptor. Residues F68, N70, and N116 each contribute to the tRNA site.

Belongs to the PTH family. As to quaternary structure, monomer.

It is found in the cytoplasm. It catalyses the reaction an N-acyl-L-alpha-aminoacyl-tRNA + H2O = an N-acyl-L-amino acid + a tRNA + H(+). In terms of biological role, hydrolyzes ribosome-free peptidyl-tRNAs (with 1 or more amino acids incorporated), which drop off the ribosome during protein synthesis, or as a result of ribosome stalling. Functionally, catalyzes the release of premature peptidyl moieties from peptidyl-tRNA molecules trapped in stalled 50S ribosomal subunits, and thus maintains levels of free tRNAs and 50S ribosomes. The chain is Peptidyl-tRNA hydrolase from Xanthomonas campestris pv. campestris (strain 8004).